Here is a 568-residue protein sequence, read N- to C-terminus: Light-independent protochlorophyllide reductase subunit B (568 aa).

D36 is a [4Fe-4S] cluster binding site. The active-site Proton donor is the D293. Residue 437-438 (GM) participates in substrate binding. Residues 476–517 (ANGHPEAGVSVGAAEPSAAPSRSVVTEESNRATTPSSSTVHP) are disordered. The segment covering 498–515 (SVVTEESNRATTPSSSTV) has biased composition (polar residues).

The protein belongs to the ChlB/BchB/BchZ family. In terms of assembly, protochlorophyllide reductase is composed of three subunits; BchL, BchN and BchB. Forms a heterotetramer of two BchB and two BchN subunits. [4Fe-4S] cluster serves as cofactor.

The enzyme catalyses chlorophyllide a + oxidized 2[4Fe-4S]-[ferredoxin] + 2 ADP + 2 phosphate = protochlorophyllide a + reduced 2[4Fe-4S]-[ferredoxin] + 2 ATP + 2 H2O. The protein operates within porphyrin-containing compound metabolism; bacteriochlorophyll biosynthesis (light-independent). In terms of biological role, component of the dark-operative protochlorophyllide reductase (DPOR) that uses Mg-ATP and reduced ferredoxin to reduce ring D of protochlorophyllide (Pchlide) to form chlorophyllide a (Chlide). This reaction is light-independent. The NB-protein (BchN-BchB) is the catalytic component of the complex. The chain is Light-independent protochlorophyllide reductase subunit B from Roseiflexus sp. (strain RS-1).